Reading from the N-terminus, the 307-residue chain is 3-ketodihydrosphingosine reductase TSC10 (307 aa).

Leu-11 serves as a coordination point for NADP(+). Residues Gly-14, Ser-16, and Gly-18 each coordinate NADPH. Residues 14–18 carry the GXSXG motif; that stretch reads GGSQG. Leu-19 provides a ligand contact to NADP(+). The NADPH site is built by Arg-40, Lys-44, and Leu-74. The active-site Proton donor is the Ser-147. NADP(+) contacts are provided by Tyr-161, Lys-165, and Ser-194. Tyr-161 serves as the catalytic Proton acceptor. Lys-165 functions as the Lowers pKa of active site Tyr in the catalytic mechanism. A helical membrane pass occupies residues 261–281; the sequence is YFLWPLGWLLGALVNLLVVPI.

Belongs to the short-chain dehydrogenases/reductases (SDR) family.

It is found in the endoplasmic reticulum membrane. It catalyses the reaction sphinganine + NADP(+) = 3-oxosphinganine + NADPH + H(+). The protein operates within lipid metabolism; sphingolipid metabolism. Its function is as follows. Catalyzes the reduction of 3'-oxosphinganine (3-ketodihydrosphingosine/KDS) to sphinganine (dihydrosphingosine/DHS), the second step of de novo sphingolipid biosynthesis. This chain is 3-ketodihydrosphingosine reductase TSC10 (TSC10), found in Eremothecium gossypii (strain ATCC 10895 / CBS 109.51 / FGSC 9923 / NRRL Y-1056) (Yeast).